The sequence spans 218 residues: Small ribosomal subunit protein uS3 (218 aa).

Methionine 1 carries the N-acetylmethionine modification. The KH type-2 domain occupies 23 to 95; that stretch reads LNELFTREFN…TVVLFAEKIL (73 aa).

The protein belongs to the universal ribosomal protein uS3 family.

In Dictyostelium discoideum (Social amoeba), this protein is Small ribosomal subunit protein uS3 (rps3).